A 107-amino-acid chain; its full sequence is UPF0145 protein PM1668 (107 aa).

It belongs to the UPF0145 family.

This chain is UPF0145 protein PM1668, found in Pasteurella multocida (strain Pm70).